The chain runs to 704 residues: Ubiquitin-like modifier-activating enzyme atg7 (704 aa).

Residues 372–377 (GAGTLG) carry the GXGXXG motif motif. Cysteine 555 (glycyl thioester intermediate) is an active-site residue. A homodimerization region spans residues 660 to 699 (ALTEKDYITELSGLAEVQRKAEAAANDVEWDSDEEGMEDE). Residues 682-704 (AAANDVEWDSDEEGMEDEEPELL) form a disordered region. Acidic residues predominate over residues 687–704 (VEWDSDEEGMEDEEPELL).

Belongs to the ATG7 family. As to quaternary structure, homodimer. Interacts with ATG8 through a thioester bond between Cys-555 and the C-terminal Gly of ATG8 and with ATG12 through a thioester bond between Cys-555 and the C-terminal Gly of ATG12. Also interacts with ATG3.

It localises to the cytoplasm. The protein localises to the preautophagosomal structure. In terms of biological role, E1-like activating enzyme involved in the 2 ubiquitin-like systems required for cytoplasm to vacuole transport (Cvt) and autophagy. Activates ATG12 for its conjugation with ATG5 and ATG8 for its conjugation with phosphatidylethanolamine. Both systems are needed for the ATG8 association to Cvt vesicles and autophagosomes membranes. Autophagy is essential for maintenance of amino acid levels and protein synthesis under nitrogen starvation. Required for selective autophagic degradation of the nucleus (nucleophagy) as well as for mitophagy which contributes to regulate mitochondrial quantity and quality by eliminating the mitochondria to a basal level to fulfill cellular energy requirements and preventing excess ROS production. Required for normal mycelial growth and conidiogenesis, and regulates sclerotial formation. Plays an essential role in pathogenesis. This is Ubiquitin-like modifier-activating enzyme atg7 from Botryotinia fuckeliana (strain T4) (Noble rot fungus).